The chain runs to 77 residues: Liver-expressed antimicrobial peptide 2 (77 aa).

Positions 1-22 (MWHLKLFAVLVICLLLAVQVHG) are cleaved as a signal peptide. Residues 23-37 (SPIPELSSAKRRPRR) constitute a propeptide that is removed on maturation. Disulfide bonds link Cys-54–Cys-65 and Cys-60–Cys-70.

The protein belongs to the LEAP2 family.

The protein localises to the secreted. In terms of biological role, has an antimicrobial activity. The protein is Liver-expressed antimicrobial peptide 2 (LEAP2) of Sus scrofa (Pig).